Consider the following 192-residue polypeptide: Probable nicotinate-nucleotide adenylyltransferase (192 aa).

It belongs to the NadD family.

The enzyme catalyses nicotinate beta-D-ribonucleotide + ATP + H(+) = deamido-NAD(+) + diphosphate. It functions in the pathway cofactor biosynthesis; NAD(+) biosynthesis; deamido-NAD(+) from nicotinate D-ribonucleotide: step 1/1. Its function is as follows. Catalyzes the reversible adenylation of nicotinate mononucleotide (NaMN) to nicotinic acid adenine dinucleotide (NaAD). The sequence is that of Probable nicotinate-nucleotide adenylyltransferase from Cytophaga hutchinsonii (strain ATCC 33406 / DSM 1761 / CIP 103989 / NBRC 15051 / NCIMB 9469 / D465).